Here is a 324-residue protein sequence, read N- to C-terminus: Olfactory receptor 1L3 (324 aa).

Residues 1-25 (MGMSNLTRLSEFILLGLSSRSEDQR) lie on the Extracellular side of the membrane. Asparagine 5 carries N-linked (GlcNAc...) asparagine glycosylation. A helical transmembrane segment spans residues 26–49 (PLFALFLIIYLVTLMGNLLIILAI). Residues 50 to 57 (HSDPRLQN) lie on the Cytoplasmic side of the membrane. Residues 58 to 79 (PMYFFLSILSFADICYTTVIVP) traverse the membrane as a helical segment. Residues 80–100 (KMLVNFLSEKKTISYAECLAQ) are Extracellular-facing. Cysteine 97 and cysteine 189 form a disulfide bridge. Residues 101–120 (MYFFLVFGNIDSYLLAAMAI) traverse the membrane as a helical segment. Residues 121-139 (NRCVAICNPFHYVTVMNRR) lie on the Cytoplasmic side of the membrane. The chain crosses the membrane as a helical span at residues 140-158 (CCVLLLAFPITFSYFHSLL). Residues 159–196 (HVLLVNRLTFCTSNVIHHFFCDVNPVLKLSCSSTFVNE) are Extracellular-facing. A helical membrane pass occupies residues 197–219 (IVAMTEGLASVMAPFVCIIISYL). At 220–236 (RILIAVLKIPSAAGKHK) the chain is on the cytoplasmic side. A helical transmembrane segment spans residues 237 to 259 (AFSTCSSHLTVVILFYGSISYVY). The Extracellular segment spans residues 260–271 (LQPLSSYTVKDR). Residues 272–291 (IATINYTVLTSVLNPFIYSL) form a helical membrane-spanning segment. Residues 292 to 324 (RNKDMKRGLQKLINKIKSQMSRFSTKTNKICGP) lie on the Cytoplasmic side of the membrane.

It belongs to the G-protein coupled receptor 1 family.

It localises to the cell membrane. Odorant receptor. This chain is Olfactory receptor 1L3 (OR1L3), found in Homo sapiens (Human).